The following is a 175-amino-acid chain: MVKSHYICAGRLVRILRGPRQDRVGVIVDIVDANRVLVENPEDAKMWRHVQNLKNVEPLKYCVSVSRNCSAKALKDALASSKALEKYAKTRTAARVEAKKACAASTDFERYQLRVARRSRAHWARKVFDEKDAKTPVSWHKVALKKMQKKAAKMDSTEGAKRRMQKAIAARKAKK.

The tract at residues 150-175 (KAAKMDSTEGAKRRMQKAIAARKAKK) is disordered. Residues 152–161 (AKMDSTEGAK) are compositionally biased toward basic and acidic residues. Residues 162–175 (RRMQKAIAARKAKK) are compositionally biased toward basic residues.

It belongs to the eukaryotic ribosomal protein eL14 family.

Component of the large ribosomal subunit. The ribosome is a large ribonucleoprotein complex responsible for the synthesis of proteins in the cell. The polypeptide is Large ribosomal subunit protein eL14 (RPL14) (Leishmania donovani).